We begin with the raw amino-acid sequence, 202 residues long: Adenylyl-sulfate kinase (202 aa).

An ATP-binding site is contributed by 35 to 42 (GLSGSGKS). Ser109 serves as the catalytic Phosphoserine intermediate.

It belongs to the APS kinase family.

It catalyses the reaction adenosine 5'-phosphosulfate + ATP = 3'-phosphoadenylyl sulfate + ADP + H(+). It participates in sulfur metabolism; hydrogen sulfide biosynthesis; sulfite from sulfate: step 2/3. Catalyzes the synthesis of activated sulfate. This is Adenylyl-sulfate kinase from Bacteroides fragilis (strain ATCC 25285 / DSM 2151 / CCUG 4856 / JCM 11019 / LMG 10263 / NCTC 9343 / Onslow / VPI 2553 / EN-2).